The primary structure comprises 393 residues: GDSL esterase/lipase At1g28600 (393 aa).

Positions 1-22 are cleaved as a signal peptide; sequence MASLDSLVIFLFSTLFVTIVSS. The Nucleophile role is filled by Ser-38. N-linked (GlcNAc...) asparagine glycans are attached at residues Asn-133 and Asn-317. Residues Asp-340 and His-343 contribute to the active site. N-linked (GlcNAc...) asparagine glycosylation occurs at Asn-382.

It belongs to the 'GDSL' lipolytic enzyme family.

It localises to the secreted. This Arabidopsis thaliana (Mouse-ear cress) protein is GDSL esterase/lipase At1g28600.